Reading from the N-terminus, the 261-residue chain is 5'-nucleotidase SurE (261 aa).

A divalent metal cation-binding residues include D8, D9, S43, and N96.

Belongs to the SurE nucleotidase family. Requires a divalent metal cation as cofactor.

It localises to the cytoplasm. The catalysed reaction is a ribonucleoside 5'-phosphate + H2O = a ribonucleoside + phosphate. Functionally, nucleotidase that shows phosphatase activity on nucleoside 5'-monophosphates. This Roseobacter denitrificans (strain ATCC 33942 / OCh 114) (Erythrobacter sp. (strain OCh 114)) protein is 5'-nucleotidase SurE.